A 96-amino-acid polypeptide reads, in one-letter code: Myticin-B (96 aa).

An N-terminal signal peptide occupies residues 1–20 (MKATMLLAVVVAVFVAGTEA). Residues 61–96 (VKFPFGATQDAKSMNELEYTPIMKSMENLDNGMDML) constitute a propeptide, removed in mature form.

In terms of processing, contains four disulfide bonds. In terms of tissue distribution, hemocytes.

It localises to the secreted. Bacteriolytic activity against Gram-positive bacteria M.luteus, B.megaterium and A.viridans and Gram-negative bacteria E.coli D31. Possesses antifungal activity against F.oxysporum. The chain is Myticin-B from Mytilus galloprovincialis (Mediterranean mussel).